A 1055-amino-acid polypeptide reads, in one-letter code: TNF receptor-associated factor homolog 1a (1055 aa).

The interval 1–56 (MSESTNEDSGAGRSSLEENSNGQRSQSEEAIAEWRSSEQVENGTPSTSPPYWDIDD) is disordered. Positions 37–46 (SEQVENGTPS) are enriched in polar residues. One can recognise an MATH domain in the interval 68-191 (FGKNTWTIEK…SGCLTIKAQV (124 aa)). Disordered stretches follow at residues 352–380 (PKKEEKSSQNRTKDGNAGEEFSREAVERD), 431–590 (AESE…NGSY), 603–772 (FSNG…APII), and 820–845 (VGSSGFTHPSSQSSGTSTLPPYSHPS). Over residues 433 to 446 (SEQKGKRGASEKEK) the composition is skewed to basic and acidic residues. Positions 441 to 496 (ASEKEKKSKKKQAKQKKNKNKGKEMRKEDKVRTQTEEREIEKEECVRAIAESSAEK) form a coiled coil. Over residues 447–460 (KSKKKQAKQKKNKN) the composition is skewed to basic residues. Residues 461 to 486 (KGKEMRKEDKVRTQTEEREIEKEECV) are compositionally biased toward basic and acidic residues. Positions 502 to 513 (DVSDVSDSVDSS) are enriched in low complexity. A compositionally biased stretch (basic and acidic residues) spans 524–537 (RESSPVHWEMDASE). Polar residues predominate over residues 569-586 (MDDSSSTCSNDSIQSGVA). A compositionally biased stretch (basic and acidic residues) spans 657-668 (QKPESPKERSPV). Polar residues-rich tracts occupy residues 723–740 (KSPSSHHASPSREAQLQT) and 823–845 (SGFTHPSSQSSGTSTLPPYSHPS).

In terms of assembly, interacts with AHK3. Interacts with ATG6, SINAT1, SINAT2, SINAT5 and SINAT6.

It is found in the cytoplasm. Functionally, functions redundantly with TRAF1B in the regulation of plant immune response. Contributes to the turnover of the nucleotide-binding domain and leucine-rich repeat-containing (NB-LRR) immune receptors SNC1 and RPS2. May associate with an E3 ubiquitin-protein ligase complex, which modulates ubiquitination and subsequent degradation of NB-LRR immune sensors to maintain their homeostasis. Functions redundantly with TRAF1B in the regulation of autophagosome formation. Required for SINAT1- and SINAT2-mediated ubiquitination and destabilization of ATG6. Functions as a molecular adapter that helps to regulate autophagy by modulating ATG6 stability. In Arabidopsis thaliana (Mouse-ear cress), this protein is TNF receptor-associated factor homolog 1a.